The chain runs to 444 residues: Phosphoglucosamine mutase (444 aa).

Catalysis depends on Ser104, which acts as the Phosphoserine intermediate. Ser104, Asp243, Asp245, and Asp247 together coordinate Mg(2+). A Phosphoserine modification is found at Ser104.

The protein belongs to the phosphohexose mutase family. Requires Mg(2+) as cofactor. In terms of processing, activated by phosphorylation.

It carries out the reaction alpha-D-glucosamine 1-phosphate = D-glucosamine 6-phosphate. Catalyzes the conversion of glucosamine-6-phosphate to glucosamine-1-phosphate. This chain is Phosphoglucosamine mutase, found in Neisseria gonorrhoeae (strain ATCC 700825 / FA 1090).